A 57-amino-acid chain; its full sequence is uncharacterized protein (57 aa).

The helical transmembrane segment at 34-51 (TALLDAAAVVVVPGLLAA) threads the bilayer.

It is found in the membrane. This is an uncharacterized protein from Dictyostelium discoideum (Social amoeba).